We begin with the raw amino-acid sequence, 389 residues long: Probable nitrate transporter NarT (389 aa).

12 helical membrane passes run Thr-14 to Ile-34, Ile-45 to Tyr-65, Ile-69 to Phe-89, Gly-97 to Val-117, Gly-139 to Trp-159, Thr-161 to Gly-181, Trp-211 to Val-231, Gly-246 to Phe-266, Ala-268 to Ile-288, Leu-294 to Phe-314, Ile-331 to Ala-351, and Leu-353 to Phe-373.

This sequence belongs to the major facilitator superfamily. Nitrate/nitrite porter (TC 2.A.1.8) family.

It localises to the cell membrane. Its function is as follows. Probably required for nitrate uptake under anoxic conditions. Also possibly involved in excretion of nitrite produced by the dissimilatory reduction of nitrate. This chain is Probable nitrate transporter NarT (narT), found in Staphylococcus aureus (strain USA300).